The chain runs to 1682 residues: 1-phosphatidylinositol 4,5-bisphosphate phosphodiesterase eta-1 (1682 aa).

The PH domain occupies 20–128 (SVMQSGTQMI…WITGLKYLMA (109 aa)). 3 EF-hand domains span residues 142-177 (THDQWVKQTFEEADKNGDGLLNIEEIHQLMHKLNVN), 178-214 (LPRRKVRQMFQEADTDENQGTLTFEEFCVFYKMMSLR), and 226-246 (DKKDHLTVEELAQFLKVEQKM). The Ca(2+) site is built by aspartate 155, asparagine 157, aspartate 159, and glutamate 166. The PI-PLC X-box domain occupies 299 to 444 (QDMDQPLCNY…LKGKILVKGK (146 aa)). The active site involves histidine 314. Asparagine 315, glutamate 344, and aspartate 346 together coordinate Ca(2+). Residue histidine 358 is part of the active site. Glutamate 393 contacts Ca(2+). Positions 442 and 444 each coordinate substrate. The segment at 534 to 588 (LDVKESGKKSHGRSLMANFGKHKQKATKSRSKSYSTDDEDDSLQNPGKEGGQLYR) is disordered. Residues 553-564 (GKHKQKATKSRS) show a composition bias toward basic residues. Positions 602-715 (LSDLVVYTNS…GYILKPQQMC (114 aa)) constitute a PI-PLC Y-box domain. The substrate site is built by serine 628 and arginine 655. The region spanning 716-844 (KGTFNPFSGD…PGYRHVYLEG (129 aa)) is the C2 domain. The Ca(2+) site is built by isoleucine 759, aspartate 761, aspartate 785, aspartate 814, histidine 815, and aspartate 816. A compositionally biased stretch (basic and acidic residues) spans 992–1018 (DTDGKENCLAGDKDDRRKGAATRKDPH). 3 disordered regions span residues 992–1083 (DTDG…LSPR), 1296–1321 (NLPGFPDASPGQFPKSPTHGEDHSQV), and 1581–1603 (RAKEKQEAGKQKAMAQSTRGGVV). Over residues 1019 to 1033 (FSNFNKKLSSSSSAL) the composition is skewed to low complexity. Composition is skewed to polar residues over residues 1040 to 1050 (QGPTASVSNPE) and 1065 to 1074 (NMTNDCQENH). A compositionally biased stretch (basic and acidic residues) spans 1581–1590 (RAKEKQEAGK).

Requires Ca(2+) as cofactor. In terms of tissue distribution, expressed in brain and to a lower extent in lung. In brain, it is found in cerebrum, cerebellum and spinal cord.

It is found in the cytoplasm. It localises to the membrane. The enzyme catalyses a 1,2-diacyl-sn-glycero-3-phospho-(1D-myo-inositol-4,5-bisphosphate) + H2O = 1D-myo-inositol 1,4,5-trisphosphate + a 1,2-diacyl-sn-glycerol + H(+). Its function is as follows. The production of the second messenger molecules diacylglycerol (DAG) and inositol 1,4,5-trisphosphate (IP3) is mediated by calcium-activated phosphatidylinositol-specific phospholipase C enzymes. The chain is 1-phosphatidylinositol 4,5-bisphosphate phosphodiesterase eta-1 from Mus musculus (Mouse).